Reading from the N-terminus, the 793-residue chain is Serine/threonine-protein phosphatase 1 regulatory subunit GAC1 (793 aa).

Residues 1-10 (MVIQTATTLS) are compositionally biased toward polar residues. The tract at residues 1 to 20 (MVIQTATTLSPAKARPSFPH) is disordered. One can recognise a CBM21 domain in the interval 235–360 (TKYLNGQNVK…NNNGKNYHLF (126 aa)). Phosphoserine is present on residues Ser-415 and Ser-424. 2 disordered regions span residues 450 to 491 (LENA…SIDL) and 616 to 671 (TTMD…LNDH). A compositionally biased stretch (polar residues) spans 623–633 (KTSTINNSTDT). Basic and acidic residues predominate over residues 637–648 (PSKENGTVKENK). The span at 649 to 665 (SSANSTSAPSSSQNRAS) shows a compositional bias: low complexity.

In terms of biological role, regulates the activity of glycogen synthase. It is most probably a regulatory subunit for protein phosphatase type 1. This Saccharomyces cerevisiae (strain ATCC 204508 / S288c) (Baker's yeast) protein is Serine/threonine-protein phosphatase 1 regulatory subunit GAC1 (GAC1).